Consider the following 180-residue polypeptide: Ribulose bisphosphate carboxylase small subunit, chloroplastic 2 (180 aa).

Residues 1–56 constitute a chloroplast transit peptide; the sequence is MASSVLSSAAVATVSRTPAQASMVAPFTGLKSTVGFPATKKNDDITSLASNGGRVQ.

It belongs to the RuBisCO small chain family. As to quaternary structure, heterohexadecamer of 8 large and 8 small subunits.

It localises to the plastid. It is found in the chloroplast. Functionally, ruBisCO catalyzes two reactions: the carboxylation of D-ribulose 1,5-bisphosphate, the primary event in carbon dioxide fixation, as well as the oxidative fragmentation of the pentose substrate. Both reactions occur simultaneously and in competition at the same active site. Although the small subunit is not catalytic it is essential for maximal activity. The protein is Ribulose bisphosphate carboxylase small subunit, chloroplastic 2 of Spinacia oleracea (Spinach).